A 418-amino-acid chain; its full sequence is MGDKGTRVFKKASPNGKLTVYLGKRDFVDHIDLVDPVDGVVLVDPEYLKERRVYVTLTCAFRYGREDLDVLGLTFRKDLFVANVQSFPPAPEDKKPLTRLQERLIKKLGEHACPFTFEIPPNLPCSVTLQPGPEDTGKACGVDYEVKAFCAENLEEKIHKRNSVRLVIRKVQYAPERPGPQPTAETTRQFLMSDKPLHLEASLDKEIYYHGEPISVNVHVTNNTNKTVKKIKISVRQYADICLFNTAQYKCPVAMEEADDNVAPSSTFCKVYTLTPFLANNREKRGLALDGKLKHEDTNLASSTLLREGANREILGIIVSYKVKVKLVVSRGGLLGDLASSDVAVELPFTLMHPKPKEEPPHREVPESETPVDTNLIELDTNDDDIVFEDFARQRLKGMKDDKDEEDDGTGSPHLNNR.

Positions 1–163 (MGDKGTRVFK…LEEKIHKRNS (163 aa)) are interaction with SRC. Residues 45–86 (PEYLKERRVYVTLTCAFRYGREDLDVLGLTFRKDLFVANVQS) form an interaction with CHRM2 region. Residue tyrosine 47 is modified to Phosphotyrosine. 1D-myo-inositol hexakisphosphate-binding residues include lysine 250, methionine 255, lysine 324, and lysine 326. The interval 318–418 (IVSYKVKVKL…GTGSPHLNNR (101 aa)) is interaction with TRAF6. Disordered regions lie at residues 353-375 (HPKP…VDTN) and 397-418 (KGMK…LNNR). Over residues 355–366 (KPKEEPPHREVP) the composition is skewed to basic and acidic residues. The residue at position 412 (serine 412) is a Phosphoserine.

Belongs to the arrestin family. As to quaternary structure, monomer. Homodimer. Homooligomer; the self-association is mediated by InsP6-binding. Heterooligomer with ARRB2; the association is mediated by InsP6-binding. Interacts with ADRB2 (phosphorylated). Interacts with CHRM2 (phosphorylated). Interacts with LHCGR. Interacts with CYTH2 and CASR. Interacts with AP2B1 (dephosphorylated); phosphorylation of AP2B1 disrupts the interaction. Interacts (dephosphorylated at Ser-412) with CLTC. Interacts with CCR2 and GRK2. Interacts with CRR5. Interacts with PTAFR (phosphorylated on serine residues). Interacts with CLTC and MAP2K3. Interacts with CREB1. Interacts with TRAF6. Interacts with IGF1R and MDM2. Interacts with C5AR1. Interacts with PDE4D. Interacts with SRC (via the SH3 domain and the protein kinase domain); the interaction is independent of the phosphorylation state of SRC C-terminus. Interacts with TACR1. Interacts with RAF1. Interacts with DVL1; the interaction is enhanced by phosphorylation of DVL1. Interacts with DVL2; the interaction is enhanced by phosphorylation of DVL2. Interacts with IGF1R. Interacts with CHUK, IKBKB and MAP3K14. Associates with MAP kinase p38. Part of a MAPK signaling complex consisting of TACR1, ARRB1, SRC, MAPK1 (activated) and MAPK3 (activated). Part of a MAPK signaling complex consisting of F2RL1, ARRB1, RAF1, MAPK1 (activated) and MAPK3 (activated). Interacts with GPR143. Interacts with MAP2K4/MKK4. Interacts with HCK and CXCR1 (phosphorylated). Interacts with ACKR3 and ACKR4. Interacts with ARRDC1; the interaction is direct. Interacts with GPR61, GPR62 and GPR135. Constitutively phosphorylated at in the cytoplasm. At the plasma membrane, is rapidly dephosphorylated, a process that is required for clathrin binding and ADRB2 endocytosis but not for ADRB2 binding and desensitization. Once internalized, is rephosphorylated. Post-translationally, the ubiquitination status appears to regulate the formation and trafficking of beta-arrestin-GPCR complexes and signaling. Ubiquitination appears to occur GPCR-specific. Ubiquitinated by MDM2; the ubiquitination is required for rapid internalization of ADRB2. Deubiquitinated by USP33; the deubiquitination leads to a dissociation of the beta-arrestin-GPCR complex. Stimulation of a class A GPCR, such as ADRB2, induces transient ubiquitination and subsequently promotes association with USP33.

Its subcellular location is the cytoplasm. It is found in the nucleus. The protein localises to the cell membrane. It localises to the membrane. The protein resides in the clathrin-coated pit. Its subcellular location is the cell projection. It is found in the pseudopodium. The protein localises to the cytoplasmic vesicle. Functions in regulating agonist-mediated G-protein coupled receptor (GPCR) signaling by mediating both receptor desensitization and resensitization processes. During homologous desensitization, beta-arrestins bind to the GPRK-phosphorylated receptor and sterically preclude its coupling to the cognate G-protein; the binding appears to require additional receptor determinants exposed only in the active receptor conformation. The beta-arrestins target many receptors for internalization by acting as endocytic adapters (CLASPs, clathrin-associated sorting proteins) and recruiting the GPRCs to the adapter protein 2 complex 2 (AP-2) in clathrin-coated pits (CCPs). However, the extent of beta-arrestin involvement appears to vary significantly depending on the receptor, agonist and cell type. Internalized arrestin-receptor complexes traffic to intracellular endosomes, where they remain uncoupled from G-proteins. Two different modes of arrestin-mediated internalization occur. Class A receptors, like ADRB2, OPRM1, ENDRA, D1AR and ADRA1B dissociate from beta-arrestin at or near the plasma membrane and undergo rapid recycling. Class B receptors, like AVPR2, AGTR1, NTSR1, TRHR and TACR1 internalize as a complex with arrestin and traffic with it to endosomal vesicles, presumably as desensitized receptors, for extended periods of time. Receptor resensitization then requires that receptor-bound arrestin is removed so that the receptor can be dephosphorylated and returned to the plasma membrane. Involved in internalization of P2RY4 and UTP-stimulated internalization of P2RY2. Involved in phosphorylation-dependent internalization of OPRD1 ands subsequent recycling. Involved in the degradation of cAMP by recruiting cAMP phosphodiesterases to ligand-activated receptors. Beta-arrestins function as multivalent adapter proteins that can switch the GPCR from a G-protein signaling mode that transmits short-lived signals from the plasma membrane via small molecule second messengers and ion channels to a beta-arrestin signaling mode that transmits a distinct set of signals that are initiated as the receptor internalizes and transits the intracellular compartment. Acts as a signaling scaffold for MAPK pathways such as MAPK1/3 (ERK1/2). ERK1/2 activated by the beta-arrestin scaffold is largely excluded from the nucleus and confined to cytoplasmic locations such as endocytic vesicles, also called beta-arrestin signalosomes. Recruits c-Src/SRC to ADRB2 resulting in ERK activation. GPCRs for which the beta-arrestin-mediated signaling relies on both ARRB1 and ARRB2 (codependent regulation) include ADRB2, F2RL1 and PTH1R. For some GPCRs the beta-arrestin-mediated signaling relies on either ARRB1 or ARRB2 and is inhibited by the other respective beta-arrestin form (reciprocal regulation). Inhibits ERK1/2 signaling in AGTR1- and AVPR2-mediated activation (reciprocal regulation). Is required for SP-stimulated endocytosis of NK1R and recruits c-Src/SRC to internalized NK1R resulting in ERK1/2 activation, which is required for the antiapoptotic effects of SP. Is involved in proteinase-activated F2RL1-mediated ERK activity. Acts as a signaling scaffold for the AKT1 pathway. Is involved in alpha-thrombin-stimulated AKT1 signaling. Is involved in IGF1-stimulated AKT1 signaling leading to increased protection from apoptosis. Involved in activation of the p38 MAPK signaling pathway and in actin bundle formation. Involved in F2RL1-mediated cytoskeletal rearrangement and chemotaxis. Involved in AGTR1-mediated stress fiber formation by acting together with GNAQ to activate RHOA. Appears to function as signaling scaffold involved in regulation of MIP-1-beta-stimulated CCR5-dependent chemotaxis. Involved in attenuation of NF-kappa-B-dependent transcription in response to GPCR or cytokine stimulation by interacting with and stabilizing CHUK. May serve as nuclear messenger for GPCRs. Involved in OPRD1-stimulated transcriptional regulation by translocating to CDKN1B and FOS promoter regions and recruiting EP300 resulting in acetylation of histone H4. Involved in regulation of LEF1 transcriptional activity via interaction with DVL1 and/or DVL2 Also involved in regulation of receptors other than GPCRs. Involved in Toll-like receptor and IL-1 receptor signaling through the interaction with TRAF6 which prevents TRAF6 autoubiquitination and oligomerization required for activation of NF-kappa-B and JUN. Involved in IL8-mediated granule release in neutrophils. Binds phosphoinositides. Binds inositolhexakisphosphate (InsP6). Required for atypical chemokine receptor ACKR2-induced RAC1-LIMK1-PAK1-dependent phosphorylation of cofilin (CFL1) and for the up-regulation of ACKR2 from endosomal compartment to cell membrane, increasing its efficiency in chemokine uptake and degradation. Involved in the internalization of the atypical chemokine receptor ACKR3. Negatively regulates the NOTCH signaling pathway by mediating the ubiquitination and degradation of NOTCH1 by ITCH. Participates in the recruitment of the ubiquitin-protein ligase to the receptor. This is Beta-arrestin-1 (Arrb1) from Mus musculus (Mouse).